The sequence spans 300 residues: Merozoite surface protein 2 (300 aa).

The signal sequence occupies residues 1–20; sequence MKVIKTLSIINFFIFVTFNI. Residues N22 and N36 are each glycosylated (N-linked (GlcNAc...) asparagine). Positions 44 to 226 are polymorphic region; the sequence is EESKPPTGAV…EQTESPELQS (183 aa). The stretch at 51–58 is one 1; inverted repeat; that stretch reads GAVAGSGA. The 7 X 8 AA tandem repeats of G-S-G-A-G-A-V-A stretch occupies residues 51 to 110; sequence GAVAGSGAGAGSGAGAVAGSGAGAVAGSGAGAVAGSGAGAVAGSGAGAVAGSGAVAGSGA. Repeat copies occupy residues 61–68, 69–76, 77–84, 85–92, and 93–100. One copy of the 7; inverted repeat lies at 103–110; the sequence is GAVAGSGA. The interval 111–261 is disordered; sequence GNGANPGADA…DSQKECTDGN (151 aa). Residues 123 to 148 are compositionally biased toward low complexity; the sequence is SPSTPATTTTTTTTNDAEASTSTSSE. Residues 149–165 are compositionally biased toward basic and acidic residues; that stretch reads NRNHNNAETNPKGKGEV. 2 stretches are compositionally biased toward polar residues: residues 167 to 193 and 200 to 228; these read KPNQANKETQNNSNVQQDSQTKSNVPR and KSPTAQPEQAENSAPTAEQTESPELQSAP. The N-linked (GlcNAc...) asparagine glycan is linked to N177. Residue N249 is glycosylated (N-linked (GlcNAc...) asparagine). C257 and C265 are oxidised to a cystine. N273 and N274 each carry an N-linked (GlcNAc...) asparagine glycan. A lipid anchor (GPI-anchor amidated asparagine) is attached at N274. Residues 275–300 constitute a propeptide, removed in mature form; that stretch reads SSNIASINKFVVLISATLVLSFAIFI.

The protein resides in the cell membrane. May play a role in the merozoite attachment to the erythrocyte. The chain is Merozoite surface protein 2 from Plasmodium falciparum (isolate imr143).